Here is a 430-residue protein sequence, read N- to C-terminus: Immunoglobulin heavy constant delta (430 aa).

The Extracellular segment spans residues Ala1 to Thr406. Residues Pro6–Phe98 enclose the Ig-like 1 domain. A disulfide bridge links Cys28 with Cys84. The tract at residues Glu96–Pro167 is disordered. Positions Ala106–Ala118 are enriched in polar residues. O-linked (GalNAc...) serine glycosylation is found at Ser109 and Ser110. Thr113, Thr126, Thr127, Thr131, and Thr132 each carry an O-linked (GalNAc...) threonine glycan. The segment covering Gly138–Thr158 has biased composition (basic and acidic residues). Ig-like domains are found at residues Pro175–Ala263 and Pro267–Glu373. 2 disulfide bridges follow: Cys190–Cys249 and Cys294–Cys355. N-linked (GlcNAc...) asparagine glycans are attached at residues Asn225, Asn316, and Asn367. A helical transmembrane segment spans residues Leu407–Ile427. Over Lys428–Lys430 the chain is Cytoplasmic.

In terms of assembly, immunoglobulins are composed of two identical heavy chains and two identical light chains; disulfide-linked. An IgD molecule contains thus a delta heavy chain combined with either a kappa or a lambda light chains. Kappa light chains are found predominantly on the membrane IgD (mIgD) form and lambda on the secreted IgD (sIgD) form, this fact is poorly understood. Membrane-bound IgD molecules are non-covalently associated with a heterodimer of CD79A and CD79B.

The protein resides in the secreted. It is found in the cell membrane. Its function is as follows. Constant region of immunoglobulin heavy chains. Immunoglobulins, also known as antibodies, are membrane-bound or secreted glycoproteins produced by B lymphocytes. In the recognition phase of humoral immunity, the membrane-bound immunoglobulins serve as receptors which, upon binding of a specific antigen, trigger the clonal expansion and differentiation of B lymphocytes into immunoglobulins-secreting plasma cells. Secreted immunoglobulins mediate the effector phase of humoral immunity, which results in the elimination of bound antigens. The antigen binding site is formed by the variable domain of one heavy chain, together with that of its associated light chain. Thus, each immunoglobulin has two antigen binding sites with remarkable affinity for a particular antigen. The variable domains are assembled by a process called V-(D)-J rearrangement and can then be subjected to somatic hypermutations which, after exposure to antigen and selection, allow affinity maturation for a particular antigen. IgD is the major antigen receptor isotype on the surface of most peripheral B-cells, where it is coexpressed with IgM. The membrane-bound IgD (mIgD) induces the phosphorylation of CD79A and CD79B by the Src family of protein tyrosine kinases. Soluble IgD (sIgD) concentration in serum below those of IgG, IgA, and IgM but much higher than that of IgE. IgM and IgD molecules present on B cells have identical V regions and antigen-binding sites. After the antigen binds to the B-cell receptor, the secreted form sIgD is shut off. IgD is a potent inducer of TNF, IL1B, and IL1RN. IgD also induces release of IL6, IL10, and LIF from peripheral blood mononuclear cells. Monocytes seem to be the main producers of cytokines in vitro in the presence of IgD. This chain is Immunoglobulin heavy constant delta, found in Homo sapiens (Human).